The sequence spans 353 residues: D-alanine--D-alanine ligase (353 aa).

Residues 141–349 (KAAFAAAGLP…LPDLVAQLVH (209 aa)) enclose the ATP-grasp domain. Residue 176 to 231 (EAELGYPCFVKPANMGSSVGISKARHRDQLLAGLKEAARHDTRLVVEHGVSARELE) participates in ATP binding. 3 residues coordinate Mg(2+): aspartate 302, glutamate 316, and asparagine 318.

It belongs to the D-alanine--D-alanine ligase family. It depends on Mg(2+) as a cofactor. Mn(2+) is required as a cofactor.

It localises to the cytoplasm. It carries out the reaction 2 D-alanine + ATP = D-alanyl-D-alanine + ADP + phosphate + H(+). The protein operates within cell wall biogenesis; peptidoglycan biosynthesis. In terms of biological role, cell wall formation. The protein is D-alanine--D-alanine ligase of Synechococcus sp. (strain CC9311).